The sequence spans 324 residues: MSFFFVDLRPMNRSATHIVTEFILLGFPGCWKIQIFLFSLFLVIYVLTLLGNGAIIYAVRCNPLLHTPMYFLLGNFAFLEIWYVSSTIPNMLVNILSKTKAISFSGCFLQFYFFFSLGTTECLFLAVMAYDRYLAICHPLQYPAIMTVRFCGKLVSFCWLIGFLGYPIPIFYISQLPFCGPNIIDHFLCDMDPLMALSCAPAPITECIFYTQSSLVLFFTSMYILRSYILLLTAVFQVPSAAGRRKAFSTCGSHLVVVSLFYGTVMVMYVSPTYGIPTLLQKILTLVYSVTTPLFNPLIYTLRNKDMKLALRNVLFGMRIRQNS.

The Extracellular segment spans residues 1–35; sequence MSFFFVDLRPMNRSATHIVTEFILLGFPGCWKIQI. N-linked (GlcNAc...) asparagine glycosylation occurs at asparagine 12. A helical transmembrane segment spans residues 36–56; it reads FLFSLFLVIYVLTLLGNGAII. Topologically, residues 57-64 are cytoplasmic; sequence YAVRCNPL. The chain crosses the membrane as a helical span at residues 65 to 85; it reads LHTPMYFLLGNFAFLEIWYVS. Residues 86-109 are Extracellular-facing; that stretch reads STIPNMLVNILSKTKAISFSGCFL. Residues cysteine 107 and cysteine 199 are joined by a disulfide bond. The chain crosses the membrane as a helical span at residues 110–130; it reads QFYFFFSLGTTECLFLAVMAY. The Cytoplasmic segment spans residues 131–149; the sequence is DRYLAICHPLQYPAIMTVR. Residues 150-170 form a helical membrane-spanning segment; it reads FCGKLVSFCWLIGFLGYPIPI. Topologically, residues 171-207 are extracellular; that stretch reads FYISQLPFCGPNIIDHFLCDMDPLMALSCAPAPITEC. A helical transmembrane segment spans residues 208-227; the sequence is IFYTQSSLVLFFTSMYILRS. The Cytoplasmic segment spans residues 228–247; that stretch reads YILLLTAVFQVPSAAGRRKA. A helical transmembrane segment spans residues 248–268; it reads FSTCGSHLVVVSLFYGTVMVM. Residues 269 to 281 are Extracellular-facing; sequence YVSPTYGIPTLLQ. Residues 282 to 302 traverse the membrane as a helical segment; it reads KILTLVYSVTTPLFNPLIYTL. Residues 303–324 are Cytoplasmic-facing; sequence RNKDMKLALRNVLFGMRIRQNS.

This sequence belongs to the G-protein coupled receptor 1 family.

It localises to the cell membrane. In terms of biological role, odorant receptor. The polypeptide is Olfactory receptor 11H4 (OR11H4) (Homo sapiens (Human)).